Here is a 294-residue protein sequence, read N- to C-terminus: Large ribosomal subunit protein uL18A (294 aa).

Residue Ser-10 is modified to Phosphoserine. At Tyr-12 the chain carries Phosphotyrosine. Residue Ser-81 is modified to Phosphoserine.

This sequence belongs to the universal ribosomal protein uL18 family. In terms of assembly, component of the large ribosomal subunit (LSU). Mature yeast ribosomes consist of a small (40S) and a large (60S) subunit. The 40S small subunit contains 1 molecule of ribosomal RNA (18S rRNA) and 33 different proteins (encoded by 57 genes). The large 60S subunit contains 3 rRNA molecules (25S, 5.8S and 5S rRNA) and 46 different proteins (encoded by 81 genes). Component of a hexameric 5S RNP precursor complex, composed of 5S RNA, rrs1, rpf2, rpl5a/rpl5b, rpl11a/rpl11b and syo1; this complex acts as a precursor for ribosome assembly. rpl5a/rpl5b/uL18 forms a heterotrimeric complex with syo1 and rpl11a/rpl11b/uL5. Interaction of this complex with KAP104 allows the nuclear import of the heterotrimer.

It localises to the cytoplasm. It is found in the nucleus. Functionally, component of the ribosome, a large ribonucleoprotein complex responsible for the synthesis of proteins in the cell. The small ribosomal subunit (SSU) binds messenger RNAs (mRNAs) and translates the encoded message by selecting cognate aminoacyl-transfer RNA (tRNA) molecules. The large subunit (LSU) contains the ribosomal catalytic site termed the peptidyl transferase center (PTC), which catalyzes the formation of peptide bonds, thereby polymerizing the amino acids delivered by tRNAs into a polypeptide chain. The nascent polypeptides leave the ribosome through a tunnel in the LSU and interact with protein factors that function in enzymatic processing, targeting, and the membrane insertion of nascent chains at the exit of the ribosomal tunnel. This Schizosaccharomyces pombe (strain 972 / ATCC 24843) (Fission yeast) protein is Large ribosomal subunit protein uL18A (rpl501).